A 1182-amino-acid polypeptide reads, in one-letter code: Protein patched homolog 2 (1182 aa).

Over 1–57 the chain is Cytoplasmic; it reads MVRPLSLGELPPSYTPPARSSAPHILAGSLQAPLWLRAYFQGLLFSLGCRIQKHCGK. A helical transmembrane segment spans residues 58–78; it reads VLFLGLVAFGALALGLRVAVI. Over 79-394 the chain is Extracellular; it reads ETDLEQLWVE…DILRAFSEVS (316 aa). Asparagine 370 carries an N-linked (GlcNAc...) asparagine glycan. Positions 394-552 constitute an SSD domain; that stretch reads STTRVVGGYL…MLVFPAILSL (159 aa). Residues 395-414 form a helical membrane-spanning segment; sequence TTRVVGGYLLMLAYACVTML. Residues 415–428 lie on the Cytoplasmic side of the membrane; sequence RWDCAQSQGAVGLA. A helical membrane pass occupies residues 429 to 449; sequence GVLLVALAVASGLGLCALLGI. At 450–457 the chain is on the extracellular side; it reads TFNAATTQ. The helical transmembrane segment at 458 to 478 threads the bilayer; it reads VLPFLALGIGVDDIFLLAHAF. The Cytoplasmic segment spans residues 479 to 501; that stretch reads TKAPPDTPLPERMGECLRSTGTS. Residues 502–522 traverse the membrane as a helical segment; it reads VALTSVNNMVAFFMAALVPIP. Over 523-531 the chain is Extracellular; it reads ALRAFSLQA. Residues 532–552 traverse the membrane as a helical segment; that stretch reads AIVVGCNFAAVMLVFPAILSL. Topologically, residues 553–686 are cytoplasmic; the sequence is DLRRRHRQRL…APLLLQTRAK (134 aa). The chain crosses the membrane as a helical span at residues 687 to 707; the sequence is ALVLLFFGALLGLSLYGATLV. At 708 to 963 the chain is on the extracellular side; sequence QDGLALTDVV…WEQYLGLRRC (256 aa). Asparagine 812 carries an N-linked (GlcNAc...) asparagine glycan. A helical transmembrane segment spans residues 964–984; the sequence is FLLAVCILLVCTFLVCALLLL. At 985 to 991 the chain is on the cytoplasmic side; that stretch reads SPWTAGL. The helical transmembrane segment at 992-1012 threads the bilayer; sequence IVLVLAMMTVELFGIMGFLGI. Residue lysine 1013 is a topological domain, extracellular. The helical transmembrane segment at 1014–1034 threads the bilayer; the sequence is LSAIPVVILVASIGIGVEFTV. Residues 1035–1064 are Cytoplasmic-facing; that stretch reads HVALGFLTSHGSRNLRAASALEQTFAPVTD. A helical membrane pass occupies residues 1065 to 1085; sequence GAVSTLLGLLMLAGSNFDFII. A topological domain (extracellular) is located at residue arginine 1086. A helical membrane pass occupies residues 1087–1107; sequence YFFVVLTVLTLLGLLHGLLLL. At 1108 to 1182 the chain is on the cytoplasmic side; the sequence is PVLLSILGPP…YVHPASEEPT (75 aa).

The protein belongs to the patched family. As to expression, expressed in epithelial cells of the developing hair, tooth and whisker.

The protein resides in the membrane. Plays a role in the control of cellular growth. May have a role in epidermal development. May act as a receptor for Sonic hedgehog (SHH). The sequence is that of Protein patched homolog 2 (Ptch2) from Mus musculus (Mouse).